A 272-amino-acid polypeptide reads, in one-letter code: Centromere protein V-like protein 3 (272 aa).

A compositionally biased stretch (basic residues) spans 1 to 17 (MGRVRNRATAQRRRRKR). 2 disordered regions span residues 1-23 (MGRV…DPPA) and 65-95 (RRAR…KELD). The span at 77–88 (PSAPLPDPPAPA) shows a compositional bias: pro residues. Residues 133–246 (HTGGCHCGAV…EEVGGGDPGE (114 aa)) form the CENP-V/GFA domain. Zn(2+) is bound by residues C137, C139, C157, C159, C162, C201, and C204. Residues 240–272 (GGGDPGEEAAEEHKAIHKTSSQSAPACPREQEQ) form a disordered region.

This sequence belongs to the Gfa family. Zn(2+) serves as cofactor.

The sequence is that of Centromere protein V-like protein 3 from Homo sapiens (Human).